The following is a 205-amino-acid chain: Ribosomal RNA small subunit methyltransferase G (205 aa).

S-adenosyl-L-methionine contacts are provided by residues Gly-76, Leu-81, 127-128, and Arg-140; that span reads IE.

Belongs to the methyltransferase superfamily. RNA methyltransferase RsmG family.

The protein localises to the cytoplasm. It carries out the reaction guanosine(527) in 16S rRNA + S-adenosyl-L-methionine = N(7)-methylguanosine(527) in 16S rRNA + S-adenosyl-L-homocysteine. Specifically methylates the N7 position of guanine in position 527 of 16S rRNA. The polypeptide is Ribosomal RNA small subunit methyltransferase G (Francisella tularensis subsp. novicida (strain U112)).